Reading from the N-terminus, the 153-residue chain is Neuromedin-S (153 aa).

A signal peptide spans 1 to 26 (MKHLRPQFPLILAIYCFCMLQIPSSG). 3 propeptides span residues 27–69 (FPQP…IYKR), 70–105 (FLFH…ANRR), and 106–108 (MKR). The residue at position 141 (Asn-141) is an Asparagine amide. Positions 144–153 (NIEDEAQIQW) are excised as a propeptide.

It belongs to the NmU family.

It is found in the secreted. Implicated in the regulation of circadian rhythms through autocrine and/or paracrine actions. The sequence is that of Neuromedin-S (NMS) from Homo sapiens (Human).